The primary structure comprises 549 residues: Oxygen-dependent choline dehydrogenase (549 aa).

4-33 serves as a coordination point for FAD; the sequence is DFVIIGSGSAGSALAYRLSEDGRNSVIVLE. The active-site Proton acceptor is the His-465.

It belongs to the GMC oxidoreductase family. The cofactor is FAD.

It is found in the cell membrane. It catalyses the reaction choline + A = betaine aldehyde + AH2. The catalysed reaction is betaine aldehyde + NAD(+) + H2O = glycine betaine + NADH + 2 H(+). It participates in amine and polyamine biosynthesis; betaine biosynthesis via choline pathway; betaine aldehyde from choline (cytochrome c reductase route): step 1/1. In terms of biological role, involved in the biosynthesis of the osmoprotectant glycine betaine. Catalyzes the oxidation of choline to betaine aldehyde and betaine aldehyde to glycine betaine at the same rate. The protein is Oxygen-dependent choline dehydrogenase of Rhizobium meliloti (strain 1021) (Ensifer meliloti).